A 211-amino-acid chain; its full sequence is Thiamine-phosphate synthase (211 aa).

4-amino-2-methyl-5-(diphosphooxymethyl)pyrimidine contacts are provided by residues 40 to 42 (QLR) and N72. The Mg(2+) site is built by D73 and D92. Residue S111 participates in 4-amino-2-methyl-5-(diphosphooxymethyl)pyrimidine binding. 136 to 138 (TST) contacts 2-[(2R,5Z)-2-carboxy-4-methylthiazol-5(2H)-ylidene]ethyl phosphate. Residue K139 participates in 4-amino-2-methyl-5-(diphosphooxymethyl)pyrimidine binding. 2-[(2R,5Z)-2-carboxy-4-methylthiazol-5(2H)-ylidene]ethyl phosphate is bound by residues G167 and 187 to 188 (VS).

The protein belongs to the thiamine-phosphate synthase family. Mg(2+) serves as cofactor.

The enzyme catalyses 2-[(2R,5Z)-2-carboxy-4-methylthiazol-5(2H)-ylidene]ethyl phosphate + 4-amino-2-methyl-5-(diphosphooxymethyl)pyrimidine + 2 H(+) = thiamine phosphate + CO2 + diphosphate. It carries out the reaction 2-(2-carboxy-4-methylthiazol-5-yl)ethyl phosphate + 4-amino-2-methyl-5-(diphosphooxymethyl)pyrimidine + 2 H(+) = thiamine phosphate + CO2 + diphosphate. The catalysed reaction is 4-methyl-5-(2-phosphooxyethyl)-thiazole + 4-amino-2-methyl-5-(diphosphooxymethyl)pyrimidine + H(+) = thiamine phosphate + diphosphate. Its pathway is cofactor biosynthesis; thiamine diphosphate biosynthesis; thiamine phosphate from 4-amino-2-methyl-5-diphosphomethylpyrimidine and 4-methyl-5-(2-phosphoethyl)-thiazole: step 1/1. Its function is as follows. Condenses 4-methyl-5-(beta-hydroxyethyl)thiazole monophosphate (THZ-P) and 2-methyl-4-amino-5-hydroxymethyl pyrimidine pyrophosphate (HMP-PP) to form thiamine monophosphate (TMP). The polypeptide is Thiamine-phosphate synthase (Laribacter hongkongensis (strain HLHK9)).